Consider the following 246-residue polypeptide: MQALLFLLALLWPPEAGAEEIIGGVESKPHSRPYMAHLTITTKQGFTASCGGFLINPQFVMTAAHCKGREITVTLGAHDVSKKESTQQKIKVAKQIAHPSYSFYSNLHDIMLLKLQKKAKVTASVDVISLPSPSDFINPGKVCRAAGWGRTGVTEPTSDKLREVKLRIMTKAACKNYEHYDYNFQVCVGSPSKIRSAYKGDSGGPLVCAGVAHGIVSYGRIDAKPPAVFTRISPYVPWINLVIRGK.

An N-terminal signal peptide occupies residues 1-18 (MQALLFLLALLWPPEAGA). Residues 19–20 (EE) constitute a propeptide, activation peptide. In terms of domain architecture, Peptidase S1 spans 21–244 (IIGGVESKPH…YVPWINLVIR (224 aa)). The cysteines at positions 50 and 66 are disulfide-linked. Active-site charge relay system residues include histidine 65 and aspartate 109. Intrachain disulfides connect cysteine 143–cysteine 208 and cysteine 174–cysteine 187. Serine 202 functions as the Charge relay system in the catalytic mechanism.

Belongs to the peptidase S1 family. Granzyme subfamily.

This is Mast cell protease 1 from Meriones unguiculatus (Mongolian jird).